The chain runs to 690 residues: Xylosyl- and glucuronyltransferase LARGE2 (690 aa).

Residues 1–7 (MLPRGRP) lie on the Cytoplasmic side of the membrane. The helical; Signal-anchor for type II membrane protein transmembrane segment at 8-28 (RALGAALLLLLLLVVGFFLFG) threads the bilayer. Topologically, residues 29 to 690 (RDPEYGLGTT…TALQQSRSRA (662 aa)) are lumenal. Residues N50 and N77 are each glycosylated (N-linked (GlcNAc...) asparagine). Positions 67 to 342 (LHVAIVCAGY…FLGFDGKLLC (276 aa)) are xylosyltransferase activity. Positions 171 and 173 each coordinate Mn(2+). N201 carries an N-linked (GlcNAc...) asparagine glycan. Residues 343–686 (RELFGCPNQF…LKYLTALQQS (344 aa)) are glucuronyltransferase activity. Mn(2+) contacts are provided by D491 and D493.

This sequence in the C-terminal section; belongs to the glycosyltransferase 49 family. The protein in the N-terminal section; belongs to the glycosyltransferase 8 family. Interacts with B4GAT1. The cofactor is Mn(2+).

It is found in the golgi apparatus membrane. The catalysed reaction is 3-O-[beta-D-GlcA-(1-&gt;3)-beta-D-Xyl-(1-&gt;4)-Rib-ol-P-Rib-ol-P-3-beta-D-GalNAc-(1-&gt;3)-beta-D-GlcNAc-(1-&gt;4)-(O-6-P-alpha-D-Man)]-Thr-[protein] + UDP-alpha-D-xylose = 3-O-[alpha-D-Xyl-(1-&gt;3)-beta-D-GlcA-(1-&gt;4)-beta-D-Xyl-(1-&gt;4)-Rib-ol-P-Rib-ol-P-3-beta-D-GalNAc-(1-&gt;3)-beta-D-GlcNAc-(1-&gt;4)-(O-6-P-alpha-D-Man)]-Thr-[protein] + UDP + H(+). It catalyses the reaction 3-O-{(1-&gt;[3)-alpha-D-Xyl-(1-&gt;3)-beta-D-GlcA-(1-&gt;](n)-4)-beta-D-Xyl-(1-&gt;4)-Rib-ol-P-Rib-ol-P-3-beta-D-GalNAc-(1-&gt;3)-beta-D-GlcNAc-(1-&gt;4)-O-6-P-alpha-D-Man}-L-Thr-[protein] + UDP-alpha-D-glucuronate = 3-O-{beta-D-GlcA-(1-&gt;[3)-alpha-D-Xyl-(1-&gt;3)-beta-D-GlcA-(1-&gt;](n)-4)-beta-D-Xyl-(1-&gt;4)-Rib-ol-P-Rib-ol-P-3-beta-D-GalNAc-(1-&gt;3)-beta-D-GlcNAc-(1-&gt;4)-O-6-P-alpha-D-Man}-L-Thr-[protein] + UDP + H(+). It carries out the reaction 3-O-{beta-D-GlcA-(1-&gt;[3)-alpha-D-Xyl-(1-&gt;3)-beta-D-GlcA-(1-&gt;](n)-4)-beta-D-Xyl-(1-&gt;4)-Rib-ol-P-Rib-ol-P-3-beta-D-GalNAc-(1-&gt;3)-beta-D-GlcNAc-(1-&gt;4)-O-6-P-alpha-D-Man}-L-Thr-[protein] + UDP-alpha-D-xylose = 3-O-{(1-&gt;[3)-alpha-D-Xyl-(1-&gt;3)-beta-D-GlcA-(1-&gt;](n+1)-4)-beta-D-Xyl-(1-&gt;4)-Rib-ol-P-Rib-ol-P-3-beta-D-GalNAc-(1-&gt;3)-beta-D-GlcNAc-(1-&gt;4)-O-6-P-alpha-D-Man}-L-Thr-[protein] + UDP + H(+). Its pathway is protein modification; protein glycosylation. Its function is as follows. Bifunctional glycosyltransferase with both alpha-1,3-xylosyltransferase and beta-1,3-glucuronyltransferase activities involved in the maturation of alpha-dystroglycan (DAG1) by glycosylation leading to DAG1 binding to laminin G-like domain-containing extracellular proteins with high affinity and in a phosphorylated-O-mannosyl trisaccharide dependent manner. Elongates the glucuronyl-beta-1,4-xylose-beta disaccharide primer structure by adding repeating units [-3-Xylose-alpha-1,3-GlcA-beta-1-] to produce a heteropolysaccharide. Supports the maturation of DAG1 more effectively than LARGE1. In addition, can modify both heparan sulfate (HS)- and chondroitin/dermatan sulfate (CS/DS)-proteoglycans (PGs), namely GPC4, with a glycosaminoglycan (GAG)-like polysaccharide composed of xylose and glucuronic acid to confer laminin binding. The chain is Xylosyl- and glucuronyltransferase LARGE2 from Rattus norvegicus (Rat).